The following is a 348-amino-acid chain: MKPPARMVSPERRSDDVGDTALRPQQLSEFVGQQQARANLSIFIEAARKRGEALDHVLFVGPPGLGKTTLAQIVARELGVGFRATSGPVIAKAGDLAALLTNLEERDVLFIDEIHRLSPAVEEVLYPAMEDFQLDLIIGEGPAARSVKIDLSKFTLVGATTRAGLLTNPLRDRFGIPIRLNFYTVEELEGIVTRGARVLGIGMTPDGANEIARRARGTPRIAGRLLRRVRDFASAADASAIDRAIADHALSALEVDAAGLDAMDRRYLSTIALNYGGGPVGVETMAAALSEPRDAIEDIIEPYLIQCGYLQRTPRGRLLTSHAFKHLGMAEPANRDPSQIGLFGNDDD.

A disordered region spans residues 1 to 20; that stretch reads MKPPARMVSPERRSDDVGDT. The interval 1–183 is large ATPase domain (RuvB-L); the sequence is MKPPARMVSP…FGIPIRLNFY (183 aa). ATP contacts are provided by residues Leu-22, Arg-23, Gly-64, Lys-67, Thr-68, Thr-69, 130 to 132, Arg-173, Tyr-183, and Arg-220; that span reads EDF. Thr-68 serves as a coordination point for Mg(2+). Residues 184–254 form a small ATPAse domain (RuvB-S) region; it reads TVEELEGIVT…IADHALSALE (71 aa). The head domain (RuvB-H) stretch occupies residues 257 to 348; that stretch reads AAGLDAMDRR…QIGLFGNDDD (92 aa). DNA contacts are provided by Arg-293, Arg-312, and Arg-317.

Belongs to the RuvB family. As to quaternary structure, homohexamer. Forms an RuvA(8)-RuvB(12)-Holliday junction (HJ) complex. HJ DNA is sandwiched between 2 RuvA tetramers; dsDNA enters through RuvA and exits via RuvB. An RuvB hexamer assembles on each DNA strand where it exits the tetramer. Each RuvB hexamer is contacted by two RuvA subunits (via domain III) on 2 adjacent RuvB subunits; this complex drives branch migration. In the full resolvosome a probable DNA-RuvA(4)-RuvB(12)-RuvC(2) complex forms which resolves the HJ.

The protein resides in the cytoplasm. The enzyme catalyses ATP + H2O = ADP + phosphate + H(+). Functionally, the RuvA-RuvB-RuvC complex processes Holliday junction (HJ) DNA during genetic recombination and DNA repair, while the RuvA-RuvB complex plays an important role in the rescue of blocked DNA replication forks via replication fork reversal (RFR). RuvA specifically binds to HJ cruciform DNA, conferring on it an open structure. The RuvB hexamer acts as an ATP-dependent pump, pulling dsDNA into and through the RuvAB complex. RuvB forms 2 homohexamers on either side of HJ DNA bound by 1 or 2 RuvA tetramers; 4 subunits per hexamer contact DNA at a time. Coordinated motions by a converter formed by DNA-disengaged RuvB subunits stimulates ATP hydrolysis and nucleotide exchange. Immobilization of the converter enables RuvB to convert the ATP-contained energy into a lever motion, pulling 2 nucleotides of DNA out of the RuvA tetramer per ATP hydrolyzed, thus driving DNA branch migration. The RuvB motors rotate together with the DNA substrate, which together with the progressing nucleotide cycle form the mechanistic basis for DNA recombination by continuous HJ branch migration. Branch migration allows RuvC to scan DNA until it finds its consensus sequence, where it cleaves and resolves cruciform DNA. This Bradyrhizobium sp. (strain ORS 278) protein is Holliday junction branch migration complex subunit RuvB.